The following is a 331-amino-acid chain: (E)-beta farnesene synthase MBR_03882 (331 aa).

It belongs to the trichodiene synthase family.

It carries out the reaction (2E,6E)-farnesyl diphosphate = (E)-beta-farnesene + diphosphate. Functionally, terpene synthase that catalyzes the conversion of (2E,6E)-farnesyl diphosphate (FPP) into the volatile sesquiterpene (E)-beta-farnesene. The polypeptide is (E)-beta farnesene synthase MBR_03882 (Metarhizium brunneum (strain ARSEF 3297)).